Consider the following 506-residue polypeptide: MEPARPAPGRLRPLLCLLLAASNAWTGTAGDGELQVIQPERSVSVAAGETATLHCTVTSLSPVGPIKWFKGTGPGREFIYSQKEAPFPRVTNVSDATKRNNMDFSIRISNITPADAGVYYCVKFRKEERGDMEFKSGPGTHLTVSAKPSPPVLSGPTVRATPEQTVNFTCTSHGFSPRNISLKWFKNGNELSASQTSVDPEDNNVSYSINSTTKVLLATGDVHSQVICEVAHVTLQGGPPLRGTANLSETIRVPPTLEITGSPSAGNQVNVTCQVNKFYPRHLQLTWLENGNMSRTEAASVFVENKDGTFNQTSWFLVNSSAHREAVVLTCQVEHDGQPAVSKNHTLEVSAPQKDQDTGQTPGPNDSNWTSIFIVVGVVCALLVALLIAALYLLRIRQNKAKGSTSSTRLHEPEKNTRETTQIQDNNDITYADLNLPKGKKSTPKANEPNNHTEYASIQARPPPVSEDTLTYADLDMVHLNRTPKQPAPKPEPSYSEYASVQVQRK.

The N-terminal stretch at 1–29 (MEPARPAPGRLRPLLCLLLAASNAWTGTA) is a signal peptide. One can recognise an Ig-like V-type domain in the interval 30–145 (GDGELQVIQP…SGPGTHLTVS (116 aa)). Topologically, residues 30 to 371 (GDGELQVIQP…PGPNDSNWTS (342 aa)) are extracellular. Cys-55 and Cys-121 are disulfide-bonded. Asn-92 carries N-linked (GlcNAc...) asparagine glycosylation. A disordered region spans residues 136–159 (SGPGTHLTVSAKPSPPVLSGPTVR). Ig-like C1-type domains lie at 148–248 (PSPP…ANLS) and 255–348 (PTLE…HTLE). Residues Asn-167, Asn-179, Asn-204, Asn-210, Asn-246, Asn-270, Asn-292, Asn-311, Asn-319, Asn-344, Asn-365, and Asn-368 are each glycosylated (N-linked (GlcNAc...) asparagine). A disulfide bridge links Cys-170 with Cys-228. Cys-273 and Cys-331 are joined by a disulfide. Residues 344-364 (NHTLEVSAPQKDQDTGQTPGP) are disordered. The chain crosses the membrane as a helical span at residues 372-392 (IFIVVGVVCALLVALLIAALY). Over 393 to 506 (LLRIRQNKAK…EYASVQVQRK (114 aa)) the chain is Cytoplasmic. Residues 402 to 468 (KGSTSSTRLH…QARPPPVSED (67 aa)) are disordered. The span at 409–418 (RLHEPEKNTR) shows a compositional bias: basic and acidic residues. Positions 419-429 (ETTQIQDNNDI) are enriched in polar residues. Tyr-431 bears the Phosphotyrosine; by Tyr-kinases mark. The short motif at 432–435 (ADLN) is the SH2-binding element. The short motif at 441 to 446 (KSTPKA) is the SH3-binding element. The span at 444–456 (PKANEPNNHTEYA) shows a compositional bias: polar residues. 3 positions are modified to phosphotyrosine; by Tyr-kinases: Tyr-455, Tyr-472, and Tyr-498. 3 consecutive short sequence motifs (SH2-binding) follow at residues 455 to 458 (YASI), 472 to 475 (YADL), and 498 to 501 (YASV). A disordered region spans residues 480–506 (LNRTPKQPAPKPEPSYSEYASVQVQRK). Residues 497-506 (EYASVQVQRK) show a composition bias toward polar residues.

In terms of assembly, binds PTPN11 when tyrosine-phosphorylated, except in macrophages, where it primarily binds PTPN6. Binds GRB2 in vitro. Binds JAK2 irrespective of its phosphorylation status and forms a stable complex. Binds SCAP1 and/or SCAP2. The resulting complex recruits FYB1. Binds FGR and PTK2B. Interacts with TRIM2. Phosphorylated on tyrosine residues. As to expression, highly expressed in spleen macrophages. Detected in skin dendritic cells.

Its subcellular location is the membrane. Functionally, immunoglobulin-like cell surface receptor for CD47. Acts as docking protein and induces translocation of PTPN6, PTPN11 and other binding partners from the cytosol to the plasma membrane. Supports adhesion of cerebellar neurons, neurite outgrowth and glial cell attachment. May play a key role in intracellular signaling during synaptogenesis and in synaptic function. Involved in the negative regulation of receptor tyrosine kinase-coupled cellular responses induced by cell adhesion, growth factors or insulin. Mediates negative regulation of phagocytosis, mast cell activation and dendritic cell activation. CD47 binding prevents maturation of immature dendritic cells and inhibits cytokine production by mature dendritic cells. Plays a role in antiviral immunity and limits new world arenavirus infection by decreasing virus internalization. Receptor for THBS1. Interaction with THBS1 stimulates phosphorylation of SIRPA. In response to THBS1, involved in ROS signaling in non-phagocytic cells, stimulating NADPH oxidase-derived ROS production. The protein is Tyrosine-protein phosphatase non-receptor type substrate 1 (SIRPA) of Bos taurus (Bovine).